Reading from the N-terminus, the 465-residue chain is MREIVTITASHRANHLITQFFNGQERALHERDEQAGSDPSVFLHGTIDADGRTMSYEPRAVLWDAKGGSGALGRFQYWSQDDYADEEEPPRAAPGIEVVQTAARVRRSAYQRALDAGEAPPALTAAGARYWSDYGRMIYGQDSVQELAHWHHDVAAPSAPDFEALGQRRFDRYENGYEVFTEECARDFFDISLHRQLEQCDTLQGFNLVTETDNGWGGFMAALQEQLREEVPKVCYFGWGLNVDESGPRHPPRAGFQRQSNKLRATLAMLEQSDLYFPIRSEAADSLWEAGGWACHVLDSVNSAMCLEKSRTLRFMNQLADRLHSGDEQRNVVSLMSSGQRSYSYFADAPRHRSSRGDPHTFSRCRLLRGSHSPPETTLSVENLELIRTYAWRPADTIPETARNLHHIDLGVTEKCRDVFKNWYEMVAKQFRYDPDREELKERLGTLGAAYECGWYSDDDSGDDT.

Belongs to the misato family.

The protein resides in the mitochondrion. Functionally, involved in the partitioning of the mitochondrial organelle and mitochondrial DNA (mtDNA) inheritance. In Eremothecium gossypii (strain ATCC 10895 / CBS 109.51 / FGSC 9923 / NRRL Y-1056) (Yeast), this protein is Protein DML1 (DML1).